The chain runs to 244 residues: Ribonuclease HII (244 aa).

The 192-residue stretch at 31–222 (RLIAGVDEAG…VRLALQGREG (192 aa)) folds into the RNase H type-2 domain. 3 residues coordinate a divalent metal cation: Asp37, Glu38, and Asp130.

The protein belongs to the RNase HII family. Requires Mn(2+) as cofactor. Mg(2+) is required as a cofactor.

The protein localises to the cytoplasm. The catalysed reaction is Endonucleolytic cleavage to 5'-phosphomonoester.. Its function is as follows. Endonuclease that specifically degrades the RNA of RNA-DNA hybrids. The sequence is that of Ribonuclease HII from Xanthomonas axonopodis pv. citri (strain 306).